Consider the following 367-residue polypeptide: Sigma54-dependent transcriptional regulator SfnR (367 aa).

One can recognise a Sigma-54 factor interaction domain in the interval 21–250 (QVFEDPKSQA…LENVIHHTLL (230 aa)). ATP contacts are provided by residues 49-56 (GETGTGKE) and 112-121 (ADGGTLFLDE).

Its function is as follows. Involved in the dimethyl sulfide degradation pathway. Activates the expression of sfnG and sfnF. This Pseudomonas fluorescens (strain Pf0-1) protein is Sigma54-dependent transcriptional regulator SfnR.